A 637-amino-acid polypeptide reads, in one-letter code: MLLSELSHPNQLHGLTVSQLEEIACQIRERHLEVVSTSGGHLGPGLGVVELTLALYQTLDLDFDKVVWDVGHQAYPHKLITGRFNEFDSLRQQKGIAGYLKRSESHFDHFGAGHASTSISAALGMAIARDRKGEDHKCVAVIGDGALTGGMALEAINHAGHLPNTPLVVVLNDNDMSISPPVGALSTYLNRVRLSPPLQFLSDSVQESVKNIPLIGKDIPEELKNIKGSVRRLAVPKVGAVFEELGFTYMGPIDGHDISNLINTFNAAHRLKKPVMVHVVTTKGKGYPYAEADQVGYHAQSSFDLTTGKSIPSSKPKPVSYSKIFGQTLLKICEQDSKVIGITAAMATGTGLDLLQKNIPEQYIDVGIAEQHAVTLAAGMSCDGLKPVVAIYSTFLQRAFDQLIHDVGIQNLPVSFVLDRAGIVGADGPTHQGQYDISYMRAIPNFVLMAPKDEAELQRMLITSINYKGPTALRIPRGSGLGVAVMDEGWEPLKIGEGEILEEGDDVLIIAYGSMVQSATETANLLKNRGISACIINARFVRPLDQDLIIPLVRKLKKVVTMEEGTLVGGFGSAIVEMLNDNDINIPVLRIGIPDVLVDHASPDQSKEKLGLTPDQMAEKIINKFNLAKLNSKITVE.

Thiamine diphosphate contacts are provided by residues histidine 72 and glycine 113 to alanine 115. Residue aspartate 144 participates in Mg(2+) binding. Thiamine diphosphate is bound by residues glycine 145–alanine 146, asparagine 174, tyrosine 287, and glutamate 370. Residue asparagine 174 coordinates Mg(2+).

It belongs to the transketolase family. DXPS subfamily. In terms of assembly, homodimer. Mg(2+) serves as cofactor. Thiamine diphosphate is required as a cofactor.

The enzyme catalyses D-glyceraldehyde 3-phosphate + pyruvate + H(+) = 1-deoxy-D-xylulose 5-phosphate + CO2. Its pathway is metabolic intermediate biosynthesis; 1-deoxy-D-xylulose 5-phosphate biosynthesis; 1-deoxy-D-xylulose 5-phosphate from D-glyceraldehyde 3-phosphate and pyruvate: step 1/1. Its function is as follows. Catalyzes the acyloin condensation reaction between C atoms 2 and 3 of pyruvate and glyceraldehyde 3-phosphate to yield 1-deoxy-D-xylulose-5-phosphate (DXP). This is 1-deoxy-D-xylulose-5-phosphate synthase from Prochlorococcus marinus subsp. pastoris (strain CCMP1986 / NIES-2087 / MED4).